The following is a 519-amino-acid chain: O-fucosyltransferase 1 (519 aa).

Residues 1 to 24 (MRRLGHHRLHGKTGGVGTKGMVAK) lie on the Cytoplasmic side of the membrane. A helical; Signal-anchor for type II membrane protein membrane pass occupies residues 25–45 (LSIGVIVLLICTLSLLFSANI). Over 46–519 (GSNREPTRPS…TNSTVTGLER (474 aa)) the chain is Lumenal. A disordered region spans residues 67 to 86 (KSGGWRPSSAPRSDWPPPTK). Asn-118 carries an N-linked (GlcNAc...) asparagine glycan. A substrate-binding site is contributed by 260-262 (HLR). N-linked (GlcNAc...) asparagine glycans are attached at residues Asn-327, Asn-357, and Asn-511. The interval 497-519 (RLESIRDPDSTSQTNSTVTGLER) is disordered. The segment covering 506-519 (STSQTNSTVTGLER) has biased composition (polar residues).

The protein belongs to the glycosyltransferase GT106 family.

Its subcellular location is the golgi apparatus membrane. Its pathway is glycan metabolism. In Arabidopsis thaliana (Mouse-ear cress), this protein is O-fucosyltransferase 1.